The sequence spans 209 residues: Thymidine kinase (209 aa).

ATP is bound by residues 25–32 and 103–106; these read GCMFAGKT and DEVQ. The active-site Proton acceptor is the Glu-104. 4 residues coordinate Zn(2+): Cys-160, Cys-163, Cys-198, and Cys-201.

Belongs to the thymidine kinase family. As to quaternary structure, homotetramer.

The protein localises to the cytoplasm. The catalysed reaction is thymidine + ATP = dTMP + ADP + H(+). The protein is Thymidine kinase of Mycoplasma capricolum subsp. capricolum (strain California kid / ATCC 27343 / NCTC 10154).